The primary structure comprises 445 residues: ATP-dependent protease ATPase subunit HslU (445 aa).

Residues I17, 59-64 (GVGKTE), D254, E319, and R391 each bind ATP.

It belongs to the ClpX chaperone family. HslU subfamily. As to quaternary structure, a double ring-shaped homohexamer of HslV is capped on each side by a ring-shaped HslU homohexamer. The assembly of the HslU/HslV complex is dependent on binding of ATP.

It localises to the cytoplasm. Its function is as follows. ATPase subunit of a proteasome-like degradation complex; this subunit has chaperone activity. The binding of ATP and its subsequent hydrolysis by HslU are essential for unfolding of protein substrates subsequently hydrolyzed by HslV. HslU recognizes the N-terminal part of its protein substrates and unfolds these before they are guided to HslV for hydrolysis. The sequence is that of ATP-dependent protease ATPase subunit HslU from Pseudomonas syringae pv. tomato (strain ATCC BAA-871 / DC3000).